The chain runs to 322 residues: MEPTPEMKRNRLPSMNFEAEILADPHDNSELYVIPSMRSLTAEEYVEAFQSFLDHSTEHQCMDEFNKEVMPHIMAGLGNGKSTINILGVGSGTGEQDLKMIQILQAAHPGVLINNEIIEPNPQHVAAYKELVNRAPDLQGVSFTWHQLTSSEYEQQVKEKNTHKKFDFIHMIQMLYRVEDIPNTIKFFHSCLNHQGKLLIIILSDSSGWASLWKKYRHCLPSTDSGHYITSDSITAVLRKLGIKYHVYEFPSGWDITECFIEGDPAGGHMMDFLTGTKNFLGTAPAALRSRLQEALCQPECSSRKDGRVIFCNNLSMIVAES.

Residue Glu58 participates in substrate binding. S-adenosyl-L-methionine-binding residues include Gly90, Glu119, Ser150, and Ile172. Asn313 contributes to the substrate binding site.

The protein belongs to the class I-like SAM-binding methyltransferase superfamily. HNMT family. In terms of assembly, monomer.

It catalyses the reaction carnosine + S-adenosyl-L-methionine = anserine + S-adenosyl-L-homocysteine + H(+). Functionally, N-methyltransferase that mediates the formation of anserine (beta-alanyl-N(Pi)-methyl-L-histidine) from carnosine. Anserine, a methylated derivative of carnosine (beta-alanyl-L-histidine), is an abundant constituent of vertebrate skeletal muscles. The protein is Carnosine N-methyltransferase 2 of Gallus gallus (Chicken).